We begin with the raw amino-acid sequence, 267 residues long: Undecaprenyl-diphosphatase (267 aa).

The next 7 helical transmembrane spans lie at 1 to 21 (MSLFHLILVALIQGITEFLPV), 40 to 60 (GQVIDVAVHVGTLGAVVLYFW), 85 to 105 (LAMGLIVATIPTVLAGAALHF), 111 to 131 (ALRSITVIGWTMLLFGLLLWW), 190 to 210 (MLMSIPTIIASGVLLGADVAV), 219 to 239 (DGAIAAAFAFVSALLALSLMM), and 245 to 265 (VSFTPYVIYRLALGLVLLGIA).

Belongs to the UppP family.

Its subcellular location is the cell inner membrane. The catalysed reaction is di-trans,octa-cis-undecaprenyl diphosphate + H2O = di-trans,octa-cis-undecaprenyl phosphate + phosphate + H(+). Functionally, catalyzes the dephosphorylation of undecaprenyl diphosphate (UPP). Confers resistance to bacitracin. This is Undecaprenyl-diphosphatase from Ruegeria pomeroyi (strain ATCC 700808 / DSM 15171 / DSS-3) (Silicibacter pomeroyi).